Here is a 239-residue protein sequence, read N- to C-terminus: 7-cyano-7-deazaguanine synthase (239 aa).

13–23 contributes to the ATP binding site; it reads LSGGQDSATCL. 4 residues coordinate Zn(2+): cysteine 199, cysteine 214, cysteine 217, and cysteine 220.

It belongs to the QueC family. The cofactor is Zn(2+).

The enzyme catalyses 7-carboxy-7-deazaguanine + NH4(+) + ATP = 7-cyano-7-deazaguanine + ADP + phosphate + H2O + H(+). It functions in the pathway purine metabolism; 7-cyano-7-deazaguanine biosynthesis. Catalyzes the ATP-dependent conversion of 7-carboxy-7-deazaguanine (CDG) to 7-cyano-7-deazaguanine (preQ(0)). The chain is 7-cyano-7-deazaguanine synthase from Acidovorax ebreus (strain TPSY) (Diaphorobacter sp. (strain TPSY)).